The chain runs to 37 residues: Large ribosomal subunit protein bL36c (37 aa).

Belongs to the bacterial ribosomal protein bL36 family.

The protein localises to the plastid. The chain is Large ribosomal subunit protein bL36c from Aneura mirabilis (Parasitic liverwort).